The following is a 349-amino-acid chain: Methylthioribose-1-phosphate isomerase (349 aa).

Substrate is bound by residues 49 to 51 (RGA), Arg93, and Gln201. The active-site Proton donor is the Asp242. Substrate is bound at residue 252-253 (NK).

This sequence belongs to the EIF-2B alpha/beta/delta subunits family. MtnA subfamily.

It catalyses the reaction 5-(methylsulfanyl)-alpha-D-ribose 1-phosphate = 5-(methylsulfanyl)-D-ribulose 1-phosphate. It participates in amino-acid biosynthesis; L-methionine biosynthesis via salvage pathway; L-methionine from S-methyl-5-thio-alpha-D-ribose 1-phosphate: step 1/6. Functionally, catalyzes the interconversion of methylthioribose-1-phosphate (MTR-1-P) into methylthioribulose-1-phosphate (MTRu-1-P). In Petrotoga mobilis (strain DSM 10674 / SJ95), this protein is Methylthioribose-1-phosphate isomerase.